Consider the following 497-residue polypeptide: GTPase-activating protein GYP8 (497 aa).

Residues 69–281 (FVNNSLRKDC…QIFDMTISMQ (213 aa)) form the Rab-GAP TBC domain.

The protein is GTPase-activating protein GYP8 (GYP8) of Saccharomyces cerevisiae (strain ATCC 204508 / S288c) (Baker's yeast).